Reading from the N-terminus, the 550-residue chain is MRFSLSTTAAALAVSLAFAPGWAVAWEKDKTYDITILHTNDHHGHFWQNDHGEYGLAAQKTLVDDIRKQVAAAGGSLLLLSGGDINTGVPESDLQDAEPDFRGMNLVGYDAMAIGNHEFDNPLSVLRQQEKWATFPLLSANIYQKSTQQRLFKPYALFDKQGVKIAVIGLTTDDTAKIGNPEYFTDIEFRVPATEAKQVVEQLRKTEKPDIIIAATHMGHYDDGKHGSNAPGDVEMARSLPAGYLDMIVGGHSQDPVCMASENHKQADYVPGTPCAPDRQNGTWIVQAHEWGKYVGRADFKFRNGELKLVSYQLIPINLKKKVEKADGTSERIFYTQEIAQDPSMLKLLTPFEQQGKAQLDVKVGSVNGKLEGDRSKVRFEQTNLARLLLAAQMERAGADFAVMSGGGVRDSIDAGDITYKDVLKVQPFGNTLVYADMKGSEVEKYLAVVANKKVDSGAYAQFANVSLVADGKGVSNVKIQGKPLDPNKTYRLATLNFNALGGDGYPKIDTLPSYVNTGFIDAEVLKQYIEKHSPLDASQYQPKGEIVYK.

A signal peptide spans 1-25 (MRFSLSTTAAALAVSLAFAPGWAVA). A divalent metal cation is bound by residues Asp41, His43, Asp84, Asn116, His217, His252, and Gln254. The cysteines at positions 258 and 275 are disulfide-linked. Residues 375-379 (RSKVR) and 498-504 (FNALGGD) each bind substrate.

Belongs to the 5'-nucleotidase family. It depends on Co(2+) as a cofactor.

The protein resides in the periplasm. It catalyses the reaction UDP-sugar + H2O = UMP + alpha-D-aldose 1-phosphate.. It carries out the reaction a ribonucleoside 5'-phosphate + H2O = a ribonucleoside + phosphate. In terms of biological role, degradation of external UDP-glucose to uridine monophosphate and glucose-1-phosphate, which can then be used by the cell. The protein is Protein UshA (ushA) of Yersinia enterocolitica serotype O:8 / biotype 1B (strain NCTC 13174 / 8081).